A 286-amino-acid polypeptide reads, in one-letter code: 33 kDa chaperonin (286 aa).

Cystine bridges form between cysteine 233–cysteine 235 and cysteine 267–cysteine 270.

It belongs to the HSP33 family. In terms of processing, under oxidizing conditions two disulfide bonds are formed involving the reactive cysteines. Under reducing conditions zinc is bound to the reactive cysteines and the protein is inactive.

It is found in the cytoplasm. Redox regulated molecular chaperone. Protects both thermally unfolding and oxidatively damaged proteins from irreversible aggregation. Plays an important role in the bacterial defense system toward oxidative stress. The protein is 33 kDa chaperonin of Histophilus somni (strain 2336) (Haemophilus somnus).